Here is a 502-residue protein sequence, read N- to C-terminus: Glycerol kinase (502 aa).

Thr-14 lines the ADP pocket. ATP is bound by residues Thr-14, Thr-15, and Ser-16. Thr-14 contributes to the sn-glycerol 3-phosphate binding site. Arg-18 contributes to the ADP binding site. Residues Arg-84, Glu-85, Tyr-136, and Asp-246 each coordinate sn-glycerol 3-phosphate. Positions 84, 85, 136, 246, and 247 each coordinate glycerol. The ADP site is built by Thr-268 and Gly-311. ATP-binding residues include Thr-268, Gly-311, Gln-315, and Gly-412. The ADP site is built by Gly-412 and Asn-416.

It belongs to the FGGY kinase family. As to quaternary structure, homotetramer and homodimer (in equilibrium). Heterodimer with EIIA-Glc. Binds 1 zinc ion per glycerol kinase EIIA-Glc dimer. The zinc ion is important for dimerization.

The catalysed reaction is glycerol + ATP = sn-glycerol 3-phosphate + ADP + H(+). It participates in polyol metabolism; glycerol degradation via glycerol kinase pathway; sn-glycerol 3-phosphate from glycerol: step 1/1. Its activity is regulated as follows. Activity of this regulatory enzyme is affected by several metabolites. Allosterically and non-competitively inhibited by fructose 1,6-bisphosphate (FBP) and unphosphorylated phosphocarrier protein EIIA-Glc (III-Glc), an integral component of the bacterial phosphotransferase (PTS) system. In terms of biological role, key enzyme in the regulation of glycerol uptake and metabolism. Catalyzes the phosphorylation of glycerol to yield sn-glycerol 3-phosphate. This chain is Glycerol kinase, found in Escherichia coli O8 (strain IAI1).